Consider the following 635-residue polypeptide: DNA-directed RNA polymerase subunit gamma (635 aa).

Residues C74, C76, C89, and C92 each coordinate Zn(2+). Mg(2+) contacts are provided by D471, D473, and D475.

Belongs to the RNA polymerase beta' chain family. RpoC1 subfamily. In cyanobacteria the RNAP catalytic core is composed of 2 alpha, 1 beta, 1 beta', 1 gamma and 1 omega subunit. When a sigma factor is associated with the core the holoenzyme is formed, which can initiate transcription. Mg(2+) serves as cofactor. It depends on Zn(2+) as a cofactor.

It catalyses the reaction RNA(n) + a ribonucleoside 5'-triphosphate = RNA(n+1) + diphosphate. In terms of biological role, DNA-dependent RNA polymerase catalyzes the transcription of DNA into RNA using the four ribonucleoside triphosphates as substrates. This chain is DNA-directed RNA polymerase subunit gamma, found in Prochlorococcus marinus (strain NATL1A).